Reading from the N-terminus, the 247-residue chain is Geranylgeranylglyceryl phosphate synthase (247 aa).

Residues Asp-23 and Ser-52 each contribute to the Mg(2+) site. Sn-glycerol 1-phosphate contacts are provided by residues 171-177 (YLEAGSG), 203-204 (GG), and 225-226 (GT).

The protein belongs to the GGGP/HepGP synthase family. Group II subfamily. The cofactor is Mg(2+).

The protein resides in the cytoplasm. The enzyme catalyses sn-glycerol 1-phosphate + (2E,6E,10E)-geranylgeranyl diphosphate = sn-3-O-(geranylgeranyl)glycerol 1-phosphate + diphosphate. It participates in membrane lipid metabolism; glycerophospholipid metabolism. Functionally, prenyltransferase that catalyzes the transfer of the geranylgeranyl moiety of geranylgeranyl diphosphate (GGPP) to the C3 hydroxyl of sn-glycerol-1-phosphate (G1P). This reaction is the first ether-bond-formation step in the biosynthesis of archaeal membrane lipids. In Methanococcoides burtonii (strain DSM 6242 / NBRC 107633 / OCM 468 / ACE-M), this protein is Geranylgeranylglyceryl phosphate synthase.